The primary structure comprises 448 residues: N-succinylarginine dihydrolase (448 aa).

Residues 19–28 (GGLSYGNVAS), Asn-110, and 137–138 (HR) contribute to the substrate site. Glu-174 is an active-site residue. Position 214 (Arg-214) interacts with substrate. His-250 is a catalytic residue. Asp-252 and Asn-365 together coordinate substrate. Catalysis depends on Cys-371, which acts as the Nucleophile.

Belongs to the succinylarginine dihydrolase family. Homodimer.

The catalysed reaction is N(2)-succinyl-L-arginine + 2 H2O + 2 H(+) = N(2)-succinyl-L-ornithine + 2 NH4(+) + CO2. The protein operates within amino-acid degradation; L-arginine degradation via AST pathway; L-glutamate and succinate from L-arginine: step 2/5. Functionally, catalyzes the hydrolysis of N(2)-succinylarginine into N(2)-succinylornithine, ammonia and CO(2). The chain is N-succinylarginine dihydrolase from Pseudomonas fluorescens (strain SBW25).